A 437-amino-acid polypeptide reads, in one-letter code: MLDKNKQIWFIGIKGTGMASLALLLHDLGYNVAGSDIEKYTFTQVPLEKVGVDVKNFDPANIKSNDEQVIVKGNAFKEDNPEVKACIDKGVKWQSYPDTVEEIVQMHTSIGISGTHGKTSTTSLLSHVLGEVAPTSYLIGDGRGKGVEGSRFFVYEADEYRRHFLAYHPDYQIMTNIDFDHPDYFKDQADYTSAFQSAADQTKKALFVWGDDKRLQSLKTDIPKYTYGFKDTDDFQAVDIKKSTTGSKFHVLAHGKDLGEFEIHLFGDHSILNATAVIAVAYTEKVPMDDIREGMLTFKGAKRRFSEKDFGDIAVIDDYAHHPTEMRATIQAARQKFPDKKLVVVFQPHTFSRTKKYQKDFEEILRDVDKAYVTPIYASAREANGDISSEDLVKNIPGSEVIDLDNIADLTKNKNSVIVFMGAGDIPKYEDAFEKLL.

Position 114–120 (114–120 (GTHGKTS)) interacts with ATP.

The protein belongs to the MurCDEF family.

The protein resides in the cytoplasm. It carries out the reaction UDP-N-acetyl-alpha-D-muramate + L-alanine + ATP = UDP-N-acetyl-alpha-D-muramoyl-L-alanine + ADP + phosphate + H(+). The protein operates within cell wall biogenesis; peptidoglycan biosynthesis. Functionally, cell wall formation. The polypeptide is UDP-N-acetylmuramate--L-alanine ligase (Lactobacillus helveticus (strain DPC 4571)).